A 177-amino-acid polypeptide reads, in one-letter code: ATP synthase subunit delta 1 (177 aa).

Belongs to the ATPase delta chain family. As to quaternary structure, F-type ATPases have 2 components, F(1) - the catalytic core - and F(0) - the membrane proton channel. F(1) has five subunits: alpha(3), beta(3), gamma(1), delta(1), epsilon(1). F(0) has three main subunits: a(1), b(2) and c(10-14). The alpha and beta chains form an alternating ring which encloses part of the gamma chain. F(1) is attached to F(0) by a central stalk formed by the gamma and epsilon chains, while a peripheral stalk is formed by the delta and b chains.

The protein localises to the cell inner membrane. Functionally, f(1)F(0) ATP synthase produces ATP from ADP in the presence of a proton or sodium gradient. F-type ATPases consist of two structural domains, F(1) containing the extramembraneous catalytic core and F(0) containing the membrane proton channel, linked together by a central stalk and a peripheral stalk. During catalysis, ATP synthesis in the catalytic domain of F(1) is coupled via a rotary mechanism of the central stalk subunits to proton translocation. In terms of biological role, this protein is part of the stalk that links CF(0) to CF(1). It either transmits conformational changes from CF(0) to CF(1) or is implicated in proton conduction. This Vibrio atlanticus (strain LGP32) (Vibrio splendidus (strain Mel32)) protein is ATP synthase subunit delta 1.